The primary structure comprises 263 residues: 3-methyl-2-oxobutanoate hydroxymethyltransferase (263 aa).

The Mg(2+) site is built by D45 and D84. 3-methyl-2-oxobutanoate contacts are provided by residues 45-46 (DS), D84, and K112. E114 contacts Mg(2+). E180 (proton acceptor) is an active-site residue.

It belongs to the PanB family. In terms of assembly, homodecamer; pentamer of dimers. Mg(2+) is required as a cofactor.

The protein resides in the cytoplasm. The enzyme catalyses 3-methyl-2-oxobutanoate + (6R)-5,10-methylene-5,6,7,8-tetrahydrofolate + H2O = 2-dehydropantoate + (6S)-5,6,7,8-tetrahydrofolate. The protein operates within cofactor biosynthesis; (R)-pantothenate biosynthesis; (R)-pantoate from 3-methyl-2-oxobutanoate: step 1/2. In terms of biological role, catalyzes the reversible reaction in which hydroxymethyl group from 5,10-methylenetetrahydrofolate is transferred onto alpha-ketoisovalerate to form ketopantoate. This Klebsiella pneumoniae (strain 342) protein is 3-methyl-2-oxobutanoate hydroxymethyltransferase.